The following is a 248-amino-acid chain: Adenosylcobinamide-GDP ribazoletransferase (248 aa).

7 helical membrane passes run 24-44 (EINLKKGSALLPFVGVIIGAW), 70-90 (IIITGGFHVDALADTADGLFS), 106-126 (VGANGVIAICFYFLFYGSLFL), 134-154 (IGWLFFVLPIVAKGVTMLLFA), 168-188 (IFLGVPWWPVVIAQVIVLVAL), 189-209 (GAFFSYIGVIAYAGVILFTII), and 228-248 (AGGQMGQLICLFCLVLLWGLI).

Belongs to the CobS family. It depends on Mg(2+) as a cofactor.

It is found in the cell membrane. The catalysed reaction is alpha-ribazole + adenosylcob(III)inamide-GDP = adenosylcob(III)alamin + GMP + H(+). It catalyses the reaction alpha-ribazole 5'-phosphate + adenosylcob(III)inamide-GDP = adenosylcob(III)alamin 5'-phosphate + GMP + H(+). The protein operates within cofactor biosynthesis; adenosylcobalamin biosynthesis; adenosylcobalamin from cob(II)yrinate a,c-diamide: step 7/7. Its function is as follows. Joins adenosylcobinamide-GDP and alpha-ribazole to generate adenosylcobalamin (Ado-cobalamin). Also synthesizes adenosylcobalamin 5'-phosphate from adenosylcobinamide-GDP and alpha-ribazole 5'-phosphate. The chain is Adenosylcobinamide-GDP ribazoletransferase from Listeria monocytogenes serotype 4b (strain F2365).